The chain runs to 1065 residues: NLR family CARD domain-containing protein 3 (1065 aa).

Positions 1-10 (MRKQEVRTGR) are enriched in basic and acidic residues. The tract at residues 1–62 (MRKQEVRTGR…PLGPCSNDSR (62 aa)) is disordered. The NACHT domain maps to 139-460 (RVSITIGVAG…YCFTHLSLQE (322 aa)). An ATP-binding site is contributed by 145–152 (GVAGMGKT). A TRAF6-binding motif is present at residues 457 to 460 (SLQE). LRR repeat units follow at residues 617–639 (EANL…LLYC), 641–663 (KLRL…VLSG), 665–688 (DCRI…ALAR), 693–716 (NRSL…ALAD), 721–744 (NRTL…SMAE), 749–772 (NRTL…RMAD), 777–800 (NRSL…ALAE), 805–828 (NQGL…ALMG), 833–856 (NQTL…AIAH), 861–884 (NSTL…AIAV), 889–912 (NRTL…ALGQ), 917–940 (NRSL…AVAR), 945–968 (NTAL…VLGE), 973–996 (NRTL…ALAN), 1001–1029 (NSSL…LSGN), and 1031–1052 (RLQH…MISE).

Belongs to the NLRP family. As to quaternary structure, directly interacts (via CARD) with TMEM173/STING; this interaction reduces TMEM173 trafficking to the perinuclear region in response to interferon stimulatory DNA. Also interacts, but to a lesser extent, with TBK1. Interacts with TRAF6; this interaction results in decreased TRAF6 'Lys-63'-linked polyubiquitination, but leaves 'Lys-48'-linked chains unchanged, promoting TRAF6 protein degradation. Interacts with PIK3R1/PIK3R2; this interaction disrupts the association between PIK3R1/PIK3R2 and the p110 catalytic subunit PIK3CA/PIK3CB/PIK3CD and reduces PIK3R1/PIK3R2 activation. Weakly interacts with PYCARD/ASC. Interacts with CASP1 and CASP5.

It is found in the cytoplasm. In terms of biological role, negative regulator of the innate immune response. Attenuates signaling pathways activated by Toll-like receptors (TLRs) and the DNA sensor STING/TMEM173 in response to pathogen-associated molecular patterns, such as intracellular poly(dA:dT), but not poly(I:C), or in response to DNA virus infection, including that of Herpes simplex virus 1 (HSV1). May affect TLR4 signaling by acting at the level of TRAF6 ubiquitination, decreasing the activating 'Lys-63'-linked ubiquitination and leaving unchanged the degradative 'Lys-48'-linked ubiquitination. Inhibits the PI3K-AKT-mTOR pathway possibly by directly interacting with the posphatidylinositol 3-kinase regulatory subunit p85 (PIK3R1/PIK3R2) and disrupting the association between PIK3R1/PIK3R2 and the catalytic subunit p110 (PIK3CA/PIK3CB/PIK3CD) and reducing PIK3R1/PIK3R2 activation. Via its regulation of the PI3K-AKT-mTOR pathway, controls cell proliferation, predominantly in intestinal epithelial cells. May also affect NOD1- or NOD2-mediated NF-kappa-B activation. Might also affect the inflammatory response by preventing NLRP3 inflammasome formation, CASP1 cleavage and IL1B maturation. This Homo sapiens (Human) protein is NLR family CARD domain-containing protein 3 (NLRC3).